Here is a 253-residue protein sequence, read N- to C-terminus: uncharacterized protein (253 aa).

A helical transmembrane segment spans residues 62 to 78 (WCSIGWSIGALIIFLVY). Low complexity predominate over residues 141–158 (TTPQTTTPEIPSSTEPQE). Positions 141-225 (TTPQTTTPEI…HDNQPLEERH (85 aa)) are disordered. Residues 200–216 (NVEDEPPPNKPEEEEDH) show a composition bias toward acidic residues.

It localises to the host membrane. This is an uncharacterized protein from Aedes vexans (Inland floodwater mosquito).